The chain runs to 95 residues: Co-chaperonin GroES (95 aa).

This sequence belongs to the GroES chaperonin family. Heptamer of 7 subunits arranged in a ring. Interacts with the chaperonin GroEL.

The protein resides in the cytoplasm. Its function is as follows. Together with the chaperonin GroEL, plays an essential role in assisting protein folding. The GroEL-GroES system forms a nano-cage that allows encapsulation of the non-native substrate proteins and provides a physical environment optimized to promote and accelerate protein folding. GroES binds to the apical surface of the GroEL ring, thereby capping the opening of the GroEL channel. The protein is Co-chaperonin GroES of Francisella tularensis subsp. tularensis (strain FSC 198).